Consider the following 116-residue polypeptide: Class I hydrophobin 1 (116 aa).

The first 19 residues, 1–19 (MLFKQAILVATTLTTLAVA), serve as a signal peptide directing secretion. 4 cysteine pairs are disulfide-bonded: cysteine 35–cysteine 95, cysteine 42–cysteine 89, cysteine 43–cysteine 76, and cysteine 96–cysteine 109. N-linked (GlcNAc...) asparagine glycosylation is found at asparagine 44 and asparagine 100.

This sequence belongs to the fungal hydrophobin family. Self-assembles to form functional amyloid fibrils called rodlets. Self-assembly into fibrillar rodlets occurs spontaneously at hydrophobic:hydrophilic interfaces and the rodlets further associate laterally to form amphipathic monolayers.

Its subcellular location is the secreted. The protein localises to the cell wall. In terms of biological role, aerial growth, conidiation, and dispersal of filamentous fungi in the environment rely upon a capability of their secreting small amphipathic proteins called hydrophobins (HPBs) with low sequence identity. Class I can self-assemble into an outermost layer of rodlet bundles on aerial cell surfaces, conferring cellular hydrophobicity that supports fungal growth, development and dispersal; whereas Class II form highly ordered films at water-air interfaces through intermolecular interactions but contribute nothing to the rodlet structure. This is Class I hydrophobin 1 from Pleurotus ostreatus (strain PC15) (Oyster mushroom).